Reading from the N-terminus, the 549-residue chain is Cytoplasmic trehalase (549 aa).

Substrate is bound by residues Arg-168, 175–176 (WD), Asn-212, 221–223 (RSQ), 292–294 (RDE), and Gly-324. Residues Asp-326 and Glu-509 each act as proton donor/acceptor in the active site. Glu-525 is a substrate binding site.

Belongs to the glycosyl hydrolase 37 family. In terms of assembly, monomer.

The protein resides in the cytoplasm. It carries out the reaction alpha,alpha-trehalose + H2O = alpha-D-glucose + beta-D-glucose. It participates in glycan degradation; trehalose degradation; D-glucose from alpha,alpha-trehalose: step 1/1. Its function is as follows. Hydrolyzes trehalose to glucose. Could be involved, in cells returning to low osmolarity conditions, in the utilization of the accumulated cytoplasmic trehalose, which was synthesized in response to high osmolarity. The protein is Cytoplasmic trehalase of Escherichia coli O81 (strain ED1a).